Here is a 417-residue protein sequence, read N- to C-terminus: uncharacterized protein (417 aa).

The first 21 residues, 1–21 (MPYYWGAILIGGVFLAGCTQN), serve as a signal peptide directing secretion.

This is an uncharacterized protein from Methanocaldococcus jannaschii (strain ATCC 43067 / DSM 2661 / JAL-1 / JCM 10045 / NBRC 100440) (Methanococcus jannaschii).